A 509-amino-acid chain; its full sequence is Probable basic-leucine zipper transcription factor H (509 aa).

The disordered stretch occupies residues 1–42; that stretch reads MMNSPRSLDSSDGSVDSSSVYSGTSSFGSSFTSSTGSGFTNS. Positions 10 to 39 are enriched in low complexity; the sequence is SSDGSVDSSSVYSGTSSFGSSFTSSTGSGF. The 64-residue stretch at 50–113 folds into the bZIP domain; sequence AKKKKIRQMQ…NENYLKINQL (64 aa). Residues 51 to 77 are basic motif; the sequence is KKKKIRQMQNRQSAAQYRERKKEYLEK. The leucine-zipper stretch occupies residues 78–99; the sequence is LETIVDNLESDRNQLLQQTKQL. Disordered regions lie at residues 134 to 185, 223 to 275, 290 to 414, and 465 to 509; these read LLSK…SNNG, FSHL…SRFN, IENV…IINN, and SNNN…GIPK. Composition is skewed to low complexity over residues 226-248, 255-269, 292-350, 361-414, 465-483, and 490-509; these read LQQQ…SPIP, PIQQ…QNIN, NVNN…SNRS, QQQQ…IINN, SNNN…NSPS, and NGGI…GIPK.

This sequence belongs to the bZIP family.

Its subcellular location is the nucleus. In terms of biological role, probable transcriptional regulator. The chain is Probable basic-leucine zipper transcription factor H (bzpH) from Dictyostelium discoideum (Social amoeba).